The sequence spans 593 residues: Tyrosine-protein phosphatase non-receptor type 9 (593 aa).

Met1 is subject to N-acetylmethionine. Residues 1 to 20 are disordered; sequence MEPATAPRPDMAPELTPEEE. The CRAL-TRIO domain occupies 84 to 243; the sequence is EEPLRSEILS…NLGGYVKIDL (160 aa). Residues 303-574 enclose the Tyrosine-protein phosphatase domain; the sequence is IYEEYEDIRR…YFCYKAILEF (272 aa). Cys515 acts as the Phosphocysteine intermediate in catalysis.

Belongs to the protein-tyrosine phosphatase family. Non-receptor class 3 subfamily.

It is found in the cytoplasm. It carries out the reaction O-phospho-L-tyrosyl-[protein] + H2O = L-tyrosyl-[protein] + phosphate. Protein-tyrosine phosphatase that could participate in the transfer of hydrophobic ligands or in functions of the Golgi apparatus. This Mus musculus (Mouse) protein is Tyrosine-protein phosphatase non-receptor type 9 (Ptpn9).